Reading from the N-terminus, the 1097-residue chain is U3 small nucleolar RNA-associated protein 22 (1097 aa).

2 stretches are compositionally biased toward basic and acidic residues: residues 1–10 (MNGLKREHES) and 18–27 (KTPETEYDSH). The segment at 1-27 (MNGLKREHESSSSQDGSKTPETEYDSH) is disordered.

It belongs to the NRAP family. In terms of assembly, component of the ribosomal small subunit (SSU) processome.

Its subcellular location is the nucleus. The protein resides in the nucleolus. Its function is as follows. Involved in nucleolar processing of pre-18S ribosomal RNA and ribosome assembly. The sequence is that of U3 small nucleolar RNA-associated protein 22 from Schizosaccharomyces pombe (strain 972 / ATCC 24843) (Fission yeast).